We begin with the raw amino-acid sequence, 317 residues long: MARKKIALIGGGQIGGVLAQLCALRELGDVVLFDIVEGLPQGKCLDIAEASPVDGFDVCLKGTNSYEDIAGADVVIVTAGLPRKPGMSRDDLIEVNSKIMTSVAEGIKQYAPNSFVIVISNPLDAMVTLCQKVTGFPYNRVIGQAGVLDSARFATFIAWELGVSVKDVTAMTLGGHGDDMVPLVRYASVKGIPVMELLERKYGSKEKAKEVMDAMVNRTRLAGGEVVALLKTGSAFYSPASSAIAMAESILKDQKRVLPTCAYLQGEFGVNGYYVGVPCVLGEKGIENIIEFSLDAEEQAMMDKSVAAVKSLVDSLK.

NAD(+) contacts are provided by residues 10–15 and aspartate 34; that span reads GGGQIG. Substrate contacts are provided by arginine 83 and arginine 89. Residues asparagine 96 and 119–121 contribute to the NAD(+) site; that span reads ISN. The substrate site is built by asparagine 121 and arginine 152. Histidine 176 functions as the Proton acceptor in the catalytic mechanism.

It belongs to the LDH/MDH superfamily. MDH type 3 family.

The enzyme catalyses (S)-malate + NAD(+) = oxaloacetate + NADH + H(+). Its function is as follows. Catalyzes the reversible oxidation of malate to oxaloacetate. The chain is Malate dehydrogenase from Geobacter sulfurreducens (strain ATCC 51573 / DSM 12127 / PCA).